Reading from the N-terminus, the 80-residue chain is Lantibiotic Flvalpha.c (80 aa).

Residues M1–A38 constitute a propeptide, cleaved by FlvT. A 2,3-didehydrobutyrine; by FlvM1 mark is found at T43 and T47. The beta-methyllanthionine (Thr-Cys); by FlvM1 cross-link spans T52–C55. The lanthionine (Ser-Cys); by FlvM1 cross-link spans S58 to C68. 2 cross-links (beta-methyllanthionine (Thr-Cys); by FlvM1) span residues T69 to C74 and T71 to C78.

Post-translationally, the lanthionine formed by Ser-58 and Cys-68 forms a putative lipid II binding motif. Maturation of FlvA1 peptides involves the enzymatic conversion of Thr, and Ser into dehydrated AA and the formation of thioether bonds with cysteines. Modifications are processed by the flavecin synthetase FlvM1. This is followed by membrane translocation and cleavage of the modified precursor. In terms of processing, contains DL-lanthionine and DL-beta-methyllanthionine, when coepressed in E.coli with the flavecin synthetase FlvM1.

Its subcellular location is the secreted. In terms of biological role, lanthionine-containing peptide antibiotic (lantibiotic) only active on Gram-positive bacteria in synergy with Flvbeta peptides, which are encoded by the same operon than Flvalpha.a. Shows antibacterial activity in synergy with Flvbeta.b, Flvbeta.c, Flvbeta.e and Flvbeta.g. Does not show antibacterial activity when tested with Flvbeta.a, Flvbeta.d, Flvbeta.f and Flvbeta.h. The bactericidal activity of lantibiotics is based on depolarization of energized bacterial cytoplasmic membranes, initiated by the formation of aqueous transmembrane pores. In Ruminococcus flavefaciens, this protein is Lantibiotic Flvalpha.c.